Consider the following 464-residue polypeptide: tRNA modification GTPase MnmE (464 aa).

(6S)-5-formyl-5,6,7,8-tetrahydrofolate is bound by residues R27, E90, and K129. The region spanning 222 to 384 (GVTLVLAGSV…LYDRIRSFIA (163 aa)) is the TrmE-type G domain. Residues 232–237 (NVGKSS), 251–257 (SSYAGTT), and 276–279 (DTAG) contribute to the GTP site. A Mg(2+)-binding site is contributed by S236. A K(+)-binding site is contributed by S251. T257 serves as a coordination point for Mg(2+). Residue K464 participates in (6S)-5-formyl-5,6,7,8-tetrahydrofolate binding.

The protein belongs to the TRAFAC class TrmE-Era-EngA-EngB-Septin-like GTPase superfamily. TrmE GTPase family. In terms of assembly, homodimer. Heterotetramer of two MnmE and two MnmG subunits. It depends on K(+) as a cofactor.

It localises to the cytoplasm. Functionally, exhibits a very high intrinsic GTPase hydrolysis rate. Involved in the addition of a carboxymethylaminomethyl (cmnm) group at the wobble position (U34) of certain tRNAs, forming tRNA-cmnm(5)s(2)U34. This chain is tRNA modification GTPase MnmE, found in Borrelia recurrentis (strain A1).